Reading from the N-terminus, the 105-residue chain is Synaptic plasticity regulator PANTS (105 aa).

It belongs to the UPF0545 family. Interacts with RTN4 isoform A/Nogo-A; the interaction results in enhanced RTN4-mediated inhibition of AMPA receptor clustering. Also interacts with NCAM1, RANBP2 and CCT8. In terms of processing, rapidly degraded by proteolysis following neuronal stimulation, resulting in increased AMPA receptor clustering.

It localises to the synapse. The protein localises to the synaptic cleft. Functionally, negatively regulates long-term potentiation and modulates adult synaptic plasticity. Stabilizes the interaction of RTN4 isoform A/Nogo-A with its receptors, inhibiting clustering of postsynaptic AMPA receptors at synaptic sites. Upon neuronal stimulation, degraded at synapses, reducing RTN4 signaling and allowing AMPA receptor clustering at individual synapses. The polypeptide is Synaptic plasticity regulator PANTS (Pongo abelii (Sumatran orangutan)).